The sequence spans 416 residues: UDP-N-acetylglucosamine 1-carboxyvinyltransferase (416 aa).

A phosphoenolpyruvate-binding site is contributed by 22 to 23 (KN). UDP-N-acetyl-alpha-D-glucosamine is bound at residue arginine 92. Residue cysteine 116 is the Proton donor of the active site. 2-(S-cysteinyl)pyruvic acid O-phosphothioketal is present on cysteine 116. Positions 306 and 328 each coordinate UDP-N-acetyl-alpha-D-glucosamine.

This sequence belongs to the EPSP synthase family. MurA subfamily.

It localises to the cytoplasm. It carries out the reaction phosphoenolpyruvate + UDP-N-acetyl-alpha-D-glucosamine = UDP-N-acetyl-3-O-(1-carboxyvinyl)-alpha-D-glucosamine + phosphate. The protein operates within cell wall biogenesis; peptidoglycan biosynthesis. Functionally, cell wall formation. Adds enolpyruvyl to UDP-N-acetylglucosamine. This is UDP-N-acetylglucosamine 1-carboxyvinyltransferase from Buchnera aphidicola subsp. Baizongia pistaciae (strain Bp).